The following is a 395-amino-acid chain: Phosphopentomutase (395 aa).

Mn(2+) contacts are provided by Asp10, Asp294, His299, Asp335, His336, and His347.

Belongs to the phosphopentomutase family. Mn(2+) is required as a cofactor.

Its subcellular location is the cytoplasm. It carries out the reaction 2-deoxy-alpha-D-ribose 1-phosphate = 2-deoxy-D-ribose 5-phosphate. The catalysed reaction is alpha-D-ribose 1-phosphate = D-ribose 5-phosphate. The protein operates within carbohydrate degradation; 2-deoxy-D-ribose 1-phosphate degradation; D-glyceraldehyde 3-phosphate and acetaldehyde from 2-deoxy-alpha-D-ribose 1-phosphate: step 1/2. In terms of biological role, isomerase that catalyzes the conversion of deoxy-ribose 1-phosphate (dRib-1-P) and ribose 1-phosphate (Rib-1-P) to deoxy-ribose 5-phosphate (dRib-5-P) and ribose 5-phosphate (Rib-5-P), respectively. The polypeptide is Phosphopentomutase (Actinobacillus succinogenes (strain ATCC 55618 / DSM 22257 / CCUG 43843 / 130Z)).